The primary structure comprises 376 residues: Chaperone protein DnaJ (376 aa).

One can recognise a J domain in the interval 5–70; the sequence is DYYEILGVSK…QKRAAYDQYG (66 aa). The segment at 131 to 209 adopts a CR-type zinc-finger fold; it reads GVTKEIRIPT…CHGHGRVERS (79 aa). Zn(2+) is bound by residues Cys144, Cys147, Cys161, Cys164, Cys183, Cys186, Cys197, and Cys200. 4 CXXCXGXG motif repeats span residues 144-151, 161-168, 183-190, and 197-204; these read CDVCHGSG, CPTCHGSG, CPHCQGRG, and CNKCHGHG.

Belongs to the DnaJ family. Homodimer. Zn(2+) serves as cofactor.

The protein localises to the cytoplasm. In terms of biological role, participates actively in the response to hyperosmotic and heat shock by preventing the aggregation of stress-denatured proteins and by disaggregating proteins, also in an autonomous, DnaK-independent fashion. Unfolded proteins bind initially to DnaJ; upon interaction with the DnaJ-bound protein, DnaK hydrolyzes its bound ATP, resulting in the formation of a stable complex. GrpE releases ADP from DnaK; ATP binding to DnaK triggers the release of the substrate protein, thus completing the reaction cycle. Several rounds of ATP-dependent interactions between DnaJ, DnaK and GrpE are required for fully efficient folding. Also involved, together with DnaK and GrpE, in the DNA replication of plasmids through activation of initiation proteins. In Shigella dysenteriae serotype 1 (strain Sd197), this protein is Chaperone protein DnaJ.